The sequence spans 318 residues: Chlorophyllase-2 (318 aa).

Positions 136-140 (GHSRG) match the GXSXG motif. Residue Ser-138 is the Nucleophile of the active site. Residues Asp-167 and His-244 each act as charge relay system in the active site.

It belongs to the AB hydrolase superfamily. Lipase family. As to expression, expressed in leaves, flowers and flower buds, but not in roots.

The protein resides in the cytoplasm. It localises to the cytosol. It catalyses the reaction a chlorophyll + H2O = a chlorophyllide + phytol + H(+). The enzyme catalyses chlorophyll a + H2O = phytol + chlorophyllide a + H(+). It functions in the pathway porphyrin-containing compound metabolism; chlorophyll degradation. Catalyzes the hydrolysis of ester bond in chlorophyll to yield chlorophyllide and phytol. Does not seem to be required for chlorophyll degradation during senescence. This chain is Chlorophyllase-2, found in Arabidopsis thaliana (Mouse-ear cress).